The following is a 50-amino-acid chain: U37-theraphotoxin-Cg1a (50 aa).

The first 19 residues, 1-19 (MRVLLIIAGLALLSVVCYT), serve as a signal peptide directing secretion.

It belongs to the neurotoxin 10 (Hwtx-1) family. 67 (Jztx-67) subfamily. Expressed by the venom gland.

It is found in the secreted. The chain is U37-theraphotoxin-Cg1a from Chilobrachys guangxiensis (Chinese earth tiger tarantula).